The chain runs to 485 residues: Delta(14)-sterol reductase ERG24A (485 aa).

4 consecutive transmembrane segments (helical) span residues 18–38 (FFGP…VYVF), 77–97 (GLVS…SLIL), 131–151 (LAVL…WTFM), and 155–175 (FIQI…FVYV). N240 is a glycosylation site (N-linked (GlcNAc...) asparagine). The next 4 helical transmembrane spans lie at 259–279 (ILIT…EPAI), 285–305 (ITTD…VPYV), 319–339 (SLGP…FYIF), and 431–451 (AQGW…ILLI).

The protein belongs to the ERG4/ERG24 family.

The protein resides in the endoplasmic reticulum membrane. It carries out the reaction 4,4-dimethyl-5alpha-cholesta-8,24-dien-3beta-ol + NADP(+) = 4,4-dimethyl-5alpha-cholesta-8,14,24-trien-3beta-ol + NADPH + H(+). It participates in steroid metabolism; ergosterol biosynthesis. In terms of biological role, delta(14)-sterol reductase; part of the third module of ergosterol biosynthesis pathway that includes the late steps of the pathway. Catalyzes the reduction of the C14=C15 double bond within 4,4,24-trimethyl ergosta-8,14,24(28)-trienolto produce 4,4-dimethylfecosterol. The third module or late pathway involves the ergosterol synthesis itself through consecutive reactions that mainly occur in the endoplasmic reticulum (ER) membrane. Firstly, the squalene synthase ERG9 catalyzes the condensation of 2 farnesyl pyrophosphate moieties to form squalene, which is the precursor of all steroids. Squalene synthase is crucial for balancing the incorporation of farnesyl diphosphate (FPP) into sterol and nonsterol isoprene synthesis. Secondly, squalene is converted into lanosterol by the consecutive action of the squalene epoxidase ERG1 and the lanosterol synthase ERG7. Then, the delta(24)-sterol C-methyltransferase ERG6 methylates lanosterol at C-24 to produce eburicol. Eburicol is the substrate of the sterol 14-alpha demethylase encoded by CYP51A, CYP51B and CYP51C, to yield 4,4,24-trimethyl ergosta-8,14,24(28)-trienol. CYP51B encodes the enzyme primarily responsible for sterol 14-alpha-demethylation, and plays an essential role in ascospore formation. CYP51A encodes an additional sterol 14-alpha-demethylase, induced on ergosterol depletion and responsible for the intrinsic variation in azole sensitivity. The third CYP51 isoform, CYP51C, does not encode a sterol 14-alpha-demethylase, but is required for full virulence on host wheat ears. The C-14 reductase ERG24 then reduces the C14=C15 double bond which leads to 4,4-dimethylfecosterol. A sequence of further demethylations at C-4, involving the C-4 demethylation complex containing the C-4 methylsterol oxidases ERG25, the sterol-4-alpha-carboxylate 3-dehydrogenase ERG26 and the 3-keto-steroid reductase ERG27, leads to the production of fecosterol via 4-methylfecosterol. ERG28 has a role as a scaffold to help anchor ERG25, ERG26 and ERG27 to the endoplasmic reticulum. The C-8 sterol isomerase ERG2 then catalyzes the reaction which results in unsaturation at C-7 in the B ring of sterols and thus converts fecosterol to episterol. The sterol-C5-desaturases ERG3A and ERG3BB then catalyze the introduction of a C-5 double bond in the B ring to produce 5-dehydroepisterol. The C-22 sterol desaturases ERG5A and ERG5B further convert 5-dehydroepisterol into ergosta-5,7,22,24(28)-tetraen-3beta-ol by forming the C-22(23) double bond in the sterol side chain. Finally, ergosta-5,7,22,24(28)-tetraen-3beta-ol is substrate of the C-24(28) sterol reductase ERG4 to produce ergosterol. The protein is Delta(14)-sterol reductase ERG24A of Gibberella zeae (strain ATCC MYA-4620 / CBS 123657 / FGSC 9075 / NRRL 31084 / PH-1) (Wheat head blight fungus).